The sequence spans 117 residues: NADH-ubiquinone oxidoreductase chain 3 (117 aa).

Helical transmembrane passes span 1–21 (MLMLSTMTLIIFIITIVVMML), 58–78 (FLIAIIFLIFDVEIALLLPMI), and 86–106 (LMNWTITSLFFIFILLIGLYH).

The protein belongs to the complex I subunit 3 family.

The protein resides in the mitochondrion membrane. The enzyme catalyses a ubiquinone + NADH + 5 H(+)(in) = a ubiquinol + NAD(+) + 4 H(+)(out). In terms of biological role, core subunit of the mitochondrial membrane respiratory chain NADH dehydrogenase (Complex I) that is believed to belong to the minimal assembly required for catalysis. Complex I functions in the transfer of electrons from NADH to the respiratory chain. The immediate electron acceptor for the enzyme is believed to be ubiquinone. This is NADH-ubiquinone oxidoreductase chain 3 (mt:ND3) from Anopheles gambiae (African malaria mosquito).